The primary structure comprises 274 residues: MNPEHSPLGKTTVYANQYDASLLFPIPRAGAREQIGIGAPLPFFGTDIWNAYELSWLNARGKPQVAIATFYVPAESPNIVESKSFKLYLGSFAQTAFESIDAVRDALKRDVSAACGASVTVRLATPAEFRKLQMDELDGLSLDRLDLDADVYETDPSFLTASHDEAPVEETLVTDLLKSNCPVTGQPDWGSVQIHYVGAPIDHAGLLRYIISFRNHTGFHEQCVERIFIDILRACKPVKLAVYARYTRRGGLDINPFRTNYNQPMPDNARTARQ.

80–82 (VES) serves as a coordination point for substrate. 82–83 (SK) provides a ligand contact to NADPH. Catalysis depends on C181, which acts as the Thioimide intermediate. D188 functions as the Proton donor in the catalytic mechanism. 220-221 (HE) contributes to the substrate binding site. Residue 249-250 (RG) coordinates NADPH.

This sequence belongs to the GTP cyclohydrolase I family. QueF type 2 subfamily. Homodimer.

The protein resides in the cytoplasm. The enzyme catalyses 7-aminomethyl-7-carbaguanine + 2 NADP(+) = 7-cyano-7-deazaguanine + 2 NADPH + 3 H(+). Its pathway is tRNA modification; tRNA-queuosine biosynthesis. Functionally, catalyzes the NADPH-dependent reduction of 7-cyano-7-deazaguanine (preQ0) to 7-aminomethyl-7-deazaguanine (preQ1). This Burkholderia thailandensis (strain ATCC 700388 / DSM 13276 / CCUG 48851 / CIP 106301 / E264) protein is NADPH-dependent 7-cyano-7-deazaguanine reductase.